A 175-amino-acid chain; its full sequence is Shikimate kinase (175 aa).

11–16 (GAGKTT) serves as a coordination point for ATP. Threonine 15 provides a ligand contact to Mg(2+). Residues aspartate 33, arginine 57, and glycine 79 each contribute to the substrate site. Arginine 118 serves as a coordination point for ATP. Residue arginine 140 participates in substrate binding.

Belongs to the shikimate kinase family. As to quaternary structure, monomer. Mg(2+) serves as cofactor.

It is found in the cytoplasm. The enzyme catalyses shikimate + ATP = 3-phosphoshikimate + ADP + H(+). Its pathway is metabolic intermediate biosynthesis; chorismate biosynthesis; chorismate from D-erythrose 4-phosphate and phosphoenolpyruvate: step 5/7. Its function is as follows. Catalyzes the specific phosphorylation of the 3-hydroxyl group of shikimic acid using ATP as a cosubstrate. The chain is Shikimate kinase from Bacteroides thetaiotaomicron (strain ATCC 29148 / DSM 2079 / JCM 5827 / CCUG 10774 / NCTC 10582 / VPI-5482 / E50).